Here is a 325-residue protein sequence, read N- to C-terminus: Elongation factor P--(R)-beta-lysine ligase (325 aa).

76–78 (SPE) contacts substrate. ATP is bound by residues 100 to 102 (RNE) and N109. Residue Y118 coordinates substrate. 244 to 245 (EL) lines the ATP pocket. E251 is a substrate binding site. G300 is an ATP binding site.

Belongs to the class-II aminoacyl-tRNA synthetase family. EpmA subfamily. In terms of assembly, homodimer.

The catalysed reaction is D-beta-lysine + L-lysyl-[protein] + ATP = N(6)-((3R)-3,6-diaminohexanoyl)-L-lysyl-[protein] + AMP + diphosphate + H(+). In terms of biological role, with EpmB is involved in the beta-lysylation step of the post-translational modification of translation elongation factor P (EF-P). Catalyzes the ATP-dependent activation of (R)-beta-lysine produced by EpmB, forming a lysyl-adenylate, from which the beta-lysyl moiety is then transferred to the epsilon-amino group of a conserved specific lysine residue in EF-P. This Klebsiella pneumoniae subsp. pneumoniae (strain ATCC 700721 / MGH 78578) protein is Elongation factor P--(R)-beta-lysine ligase.